A 295-amino-acid polypeptide reads, in one-letter code: Mycothiol acetyltransferase (295 aa).

N-acetyltransferase domains lie at 5 to 141 (VEIR…TPLP) and 149 to 295 (VRLR…MYRR). A 1D-myo-inositol 2-(L-cysteinylamino)-2-deoxy-alpha-D-glucopyranoside-binding site is contributed by E35. 76-78 (LVV) lines the acetyl-CoA pocket. Residues E176, K215, and E229 each contribute to the 1D-myo-inositol 2-(L-cysteinylamino)-2-deoxy-alpha-D-glucopyranoside site. Acetyl-CoA is bound by residues 233-235 (VGV) and 240-246 (RGTGLGR). Residue Y267 coordinates 1D-myo-inositol 2-(L-cysteinylamino)-2-deoxy-alpha-D-glucopyranoside. 272-277 (NTAAVR) lines the acetyl-CoA pocket.

The protein belongs to the acetyltransferase family. MshD subfamily. In terms of assembly, monomer.

It carries out the reaction 1D-myo-inositol 2-(L-cysteinylamino)-2-deoxy-alpha-D-glucopyranoside + acetyl-CoA = mycothiol + CoA + H(+). Catalyzes the transfer of acetyl from acetyl-CoA to desacetylmycothiol (Cys-GlcN-Ins) to form mycothiol. The chain is Mycothiol acetyltransferase from Thermobispora bispora (strain ATCC 19993 / DSM 43833 / CBS 139.67 / JCM 10125 / KCTC 9307 / NBRC 14880 / R51).